Here is a 233-residue protein sequence, read N- to C-terminus: MGQKIHPTGFRLAVNKNWSSKWFASSQNFPEMLKQDIEVREFLKKRLGHASVGRVTIERPAKSARITIHSARPGVVIGKKGEDIEVLKQELQKRLGVPVHVNIEEVRKPELDAQIIADGIASQLEKRVMFRRAMKRAMQNAMRLGAEGIKIMSSGRLNGIDIARSEWYREGRVPLHTLRADVDYATSEAKTTYGIIGIKVWVYKGELKPGQVQATPAAPEKKMRKGARNAAAN.

Residues 39 to 107 (VREFLKKRLG…PVHVNIEEVR (69 aa)) enclose the KH type-2 domain. The disordered stretch occupies residues 212–233 (VQATPAAPEKKMRKGARNAAAN).

Belongs to the universal ribosomal protein uS3 family. As to quaternary structure, part of the 30S ribosomal subunit. Forms a tight complex with proteins S10 and S14.

Its function is as follows. Binds the lower part of the 30S subunit head. Binds mRNA in the 70S ribosome, positioning it for translation. In Chromobacterium violaceum (strain ATCC 12472 / DSM 30191 / JCM 1249 / CCUG 213 / NBRC 12614 / NCIMB 9131 / NCTC 9757 / MK), this protein is Small ribosomal subunit protein uS3.